A 186-amino-acid polypeptide reads, in one-letter code: Tetratricopeptide repeat protein 36 (186 aa).

TPR repeat units lie at residues 48 to 81 (SKAL…LPDR), 83 to 115 (SAYN…SGGR), and 120 to 153 (RQSF…GSPF).

Belongs to the TTC36 family.

This is Tetratricopeptide repeat protein 36 (Ttc36) from Mus musculus (Mouse).